A 344-amino-acid polypeptide reads, in one-letter code: L-rhamnose-proton symporter (344 aa).

10 helical membrane-spanning segments follow: residues 4–24 (AITM…CFYA), 38–58 (WSVG…ALLL), 68–88 (FSLS…IGNI), 101–121 (MGIG…TPII), 137–157 (TLLG…AGQL), 175–195 (LVLA…MNAA), 214–234 (LPSY…FCFI), 259–279 (VLLS…YAWG), 290–310 (ISWM…GLVL), and 323–343 (VLSL…IGMA).

The protein belongs to the L-rhamnose transporter (TC 2.A.7.6) family.

It localises to the cell inner membrane. It catalyses the reaction L-rhamnopyranose(in) + H(+)(in) = L-rhamnopyranose(out) + H(+)(out). Its function is as follows. Uptake of L-rhamnose across the cytoplasmic membrane with the concomitant transport of protons into the cell (symport system). This Escherichia coli O127:H6 (strain E2348/69 / EPEC) protein is L-rhamnose-proton symporter.